Reading from the N-terminus, the 529-residue chain is Glucose-6-phosphate isomerase (529 aa).

Glutamate 323 functions as the Proton donor in the catalytic mechanism. Residues histidine 352 and lysine 456 contribute to the active site.

It belongs to the GPI family.

The protein resides in the cytoplasm. It catalyses the reaction alpha-D-glucose 6-phosphate = beta-D-fructose 6-phosphate. It functions in the pathway carbohydrate biosynthesis; gluconeogenesis. The protein operates within carbohydrate degradation; glycolysis; D-glyceraldehyde 3-phosphate and glycerone phosphate from D-glucose: step 2/4. In terms of biological role, catalyzes the reversible isomerization of glucose-6-phosphate to fructose-6-phosphate. The polypeptide is Glucose-6-phosphate isomerase (Geobacter sulfurreducens (strain ATCC 51573 / DSM 12127 / PCA)).